We begin with the raw amino-acid sequence, 203 residues long: ATP-dependent Clp protease proteolytic subunit (203 aa).

The Nucleophile role is filled by Ser-100. The active site involves His-125.

Belongs to the peptidase S14 family. In terms of assembly, fourteen ClpP subunits assemble into 2 heptameric rings which stack back to back to give a disk-like structure with a central cavity, resembling the structure of eukaryotic proteasomes.

Its subcellular location is the cytoplasm. It carries out the reaction Hydrolysis of proteins to small peptides in the presence of ATP and magnesium. alpha-casein is the usual test substrate. In the absence of ATP, only oligopeptides shorter than five residues are hydrolyzed (such as succinyl-Leu-Tyr-|-NHMec, and Leu-Tyr-Leu-|-Tyr-Trp, in which cleavage of the -Tyr-|-Leu- and -Tyr-|-Trp bonds also occurs).. Its function is as follows. Cleaves peptides in various proteins in a process that requires ATP hydrolysis. Has a chymotrypsin-like activity. Plays a major role in the degradation of misfolded proteins. This chain is ATP-dependent Clp protease proteolytic subunit, found in Anaeromyxobacter sp. (strain K).